The following is a 442-amino-acid chain: MLKIKRVPTVVSNYQKDDGAEDPVGCGRNCLGACCLNGARLPLYACKNLVKSGEKLVISHEAIEPPVAFLESLVLGEWEDRFQRGLFRYDVTACETKVIPGKYGFVAQLNEGRHLKKRPTEFRVDKVLQSFDGSKFNFTKVGQEELLFQFEAGEDAQVQFFPCMPIDPENSPSVVAINVSPIEYGHVLLIPRVLDCLPQRIDHKSLLLAVHMAAEAANPYFRLGYNSLGAFATINHLHFQAYYLAMPFPLEKAPTKKITTTVSGVKISELLSYPVRSLLFEGGSSMQELSDTVSDCCVCLQNNNIPFNILISDCGRQIFLMPQCYAEKQALGEVSPEVLETQVNPAVWEISGHMVLKRKEDYEGASEDNAWRLLAEASLSEERFKEVTALAFEAIGCSNQEEDLEGTIVHQQNSSGNVNQKSNRTHGGPITNGTAAECLVLQ.

Histidine 238 acts as the Tele-GMP-histidine intermediate in catalysis.

It belongs to the GDPGP1 family. As to quaternary structure, interacts with TLP1. In terms of tissue distribution, expressed in leaves, stems, roots, flowers and siliques. Highest expression in green tissues.

Its subcellular location is the cytoplasm. The protein localises to the nucleus. The catalysed reaction is GDP-beta-L-galactose + phosphate = beta-L-galactose 1-phosphate + GDP + H(+). Its pathway is cofactor biosynthesis; L-ascorbate biosynthesis via GDP-alpha-D-mannose pathway; L-ascorbate from GDP-alpha-D-mannose: step 2/5. With respect to regulation, not inhibited by dithiothreitol, N-ethylmaleimide, phenylmethane sulfonyl fluoride, ascorbate, L-galactose and L-galactonolactone. In terms of biological role, catalyzes a reaction of the Smirnoff-Wheeler pathway, the major route to ascorbate biosynthesis in plants. Acts as a phosphorylase rather than as a transferase. Uses preferentially GDP-L-galactose and GDP-D-glucose as substrates. Lower activity with GDP-L-fucose, very low activity with GDP-D-mannose, and no activity with UDP-D-glucose, UDP-D-galactose or ADP-D-glucose. Highly specific for inorganic phosphate as the guanylyl acceptor. The polypeptide is GDP-L-galactose phosphorylase 1 (VTC2) (Arabidopsis thaliana (Mouse-ear cress)).